The primary structure comprises 87 residues: Small ribosomal subunit protein bS21 (87 aa).

A compositionally biased stretch (basic and acidic residues) spans 35–52; the sequence is HYEKPSEKKAREKAEAVR. The disordered stretch occupies residues 35-87; sequence HYEKPSEKKAREKAEAVRRARKLARKKLQREGLLPSKPKPAFGADRRPSAAAR. Over residues 53-62 the composition is skewed to basic residues; sequence RARKLARKKL. Basic and acidic residues predominate over residues 78–87; sequence ADRRPSAAAR.

This Rhodopseudomonas palustris (strain ATCC BAA-98 / CGA009) protein is Small ribosomal subunit protein bS21.